The primary structure comprises 65 residues: Ovary maturating parsin (65 aa).

A compositionally biased stretch (low complexity) spans 17–28 (PAAPAVAPAAPA). The tract at residues 17–36 (PAAPAVAPAAPASWPHQQRR) is disordered.

In terms of assembly, monomer.

Neurohormone that anticipates ovarian maturation. Acts as a true gonadotropin and stimulates vitellogenin biosynthesis. The chain is Ovary maturating parsin from Locusta migratoria (Migratory locust).